A 70-amino-acid polypeptide reads, in one-letter code: Putative microRNA 17 host gene protein (70 aa).

The Cytoplasmic portion of the chain corresponds to 1 to 20 (MFCHVDVKISSKRYTWTKLP). The helical transmembrane segment at 21 to 43 (LNVPKLVLIYLQSHFVLFFFSMC) threads the bilayer. Residues 44 to 70 (QSIWERPAIGRATTSSASWMVGYDCLL) are Extracellular-facing.

In terms of tissue distribution, highly expressed in B-cell lymphoma and lung cancer.

It is found in the membrane. This chain is Putative microRNA 17 host gene protein (MIR17HG), found in Homo sapiens (Human).